Reading from the N-terminus, the 145-residue chain is Large ribosomal subunit protein uL13 (145 aa).

It belongs to the universal ribosomal protein uL13 family. Part of the 50S ribosomal subunit.

This protein is one of the early assembly proteins of the 50S ribosomal subunit, although it is not seen to bind rRNA by itself. It is important during the early stages of 50S assembly. The sequence is that of Large ribosomal subunit protein uL13 from Macrococcus caseolyticus (strain JCSC5402) (Macrococcoides caseolyticum).